The following is a 771-amino-acid chain: ATP-dependent DNA helicase UvrD1 (771 aa).

Residues 1 to 21 (MSVHATDAKPPGPSPADQLLD) are disordered. Positions 21-311 (DGLNPQQRQA…ILLEQNYRST (291 aa)) constitute a UvrD-like helicase ATP-binding domain. ATP is bound by residues 45–50 (GSGKTA) and arginine 309. The region spanning 312-603 (QNILSAANSV…TLMTLHTAKG (292 aa)) is the UvrD-like helicase C-terminal domain. The interval 691–716 (FSAPVSGAGRFGSARPSPTRSGASRR) is disordered.

Belongs to the helicase family. UvrD subfamily. Monomer. It depends on Mg(2+) as a cofactor.

It carries out the reaction Couples ATP hydrolysis with the unwinding of duplex DNA by translocating in the 3'-5' direction.. It catalyses the reaction ATP + H2O = ADP + phosphate + H(+). Its function is as follows. DNA-dependent ATPase, acting on dsDNA with a 3'-ssDNA tail, unwinding with 3'-to 5'-polarity. Also highly efficient on nicked DNA. Involved in the post-incision events of nucleotide excision repair. The polypeptide is ATP-dependent DNA helicase UvrD1 (uvrD1) (Mycobacterium bovis (strain ATCC BAA-935 / AF2122/97)).